A 240-amino-acid chain; its full sequence is UDP-2,3-diacylglucosamine hydrolase (240 aa).

Residues D7, H9, D40, N78, and H113 each contribute to the Mn(2+) site. Residue N78–R79 participates in substrate binding. Substrate-binding residues include D121, S159, T163, K166, and H194. 2 residues coordinate Mn(2+): H194 and H196.

It belongs to the LpxH family. Requires Mn(2+) as cofactor.

The protein localises to the cell inner membrane. The catalysed reaction is UDP-2-N,3-O-bis[(3R)-3-hydroxytetradecanoyl]-alpha-D-glucosamine + H2O = 2-N,3-O-bis[(3R)-3-hydroxytetradecanoyl]-alpha-D-glucosaminyl 1-phosphate + UMP + 2 H(+). Its pathway is glycolipid biosynthesis; lipid IV(A) biosynthesis; lipid IV(A) from (3R)-3-hydroxytetradecanoyl-[acyl-carrier-protein] and UDP-N-acetyl-alpha-D-glucosamine: step 4/6. Its function is as follows. Hydrolyzes the pyrophosphate bond of UDP-2,3-diacylglucosamine to yield 2,3-diacylglucosamine 1-phosphate (lipid X) and UMP by catalyzing the attack of water at the alpha-P atom. Involved in the biosynthesis of lipid A, a phosphorylated glycolipid that anchors the lipopolysaccharide to the outer membrane of the cell. This chain is UDP-2,3-diacylglucosamine hydrolase, found in Stutzerimonas stutzeri (strain A1501) (Pseudomonas stutzeri).